A 206-amino-acid chain; its full sequence is Probable GTP-binding protein EngB (206 aa).

Residues serine 27–lysine 201 form the EngB-type G domain. GTP is bound by residues glycine 35–serine 42, glycine 62–leucine 66, aspartate 80–glycine 83, threonine 147–aspartate 150, and phenylalanine 180–serine 182. Serine 42 and threonine 64 together coordinate Mg(2+).

It belongs to the TRAFAC class TrmE-Era-EngA-EngB-Septin-like GTPase superfamily. EngB GTPase family. Requires Mg(2+) as cofactor.

Its function is as follows. Necessary for normal cell division and for the maintenance of normal septation. The polypeptide is Probable GTP-binding protein EngB (Idiomarina loihiensis (strain ATCC BAA-735 / DSM 15497 / L2-TR)).